Reading from the N-terminus, the 545-residue chain is E3 ubiquitin-protein ligase ipaH9.8 (545 aa).

The interaction with target proteins stretch occupies residues 1 to 242; sequence MLPINNNFSL…YHGPRIYFSM (242 aa). LRR repeat units follow at residues 57–77, 78–99, 100–117, 118–139, 140–157, 158–179, 182–203, and 205–228; these read NSDE…NLPA, QITL…PVTL, KKLY…VLPP, ALES…PDSL, LTMN…SLPQ, ALKN…SEGN, VVRE…ILNL, and NECS…QRLT. Positions 243-250 are linker; that stretch reads SDGQQNTL. An E3 ubiquitin-protein ligase catalytic domain region spans residues 251–545; that stretch reads HRPLADAVTA…SENGSQLHHS (295 aa). One can recognise an NEL domain in the interval 253–545; it reads PLADAVTAWF…SENGSQLHHS (293 aa). Cys-337 (glycyl thioester intermediate) is an active-site residue.

This sequence belongs to the LRR-containing bacterial E3 ligase family. In terms of assembly, also interacts with human and mouse U2AF1 (U2AF35). Ubiquitinated in the presence of host E1 ubiquitin-activating enzyme, E2 ubiquitin-conjugating enzyme and ubiquitin.

The protein localises to the secreted. Its subcellular location is the host cytoplasm. The protein resides in the host nucleus. The catalysed reaction is S-ubiquitinyl-[E2 ubiquitin-conjugating enzyme]-L-cysteine + [acceptor protein]-L-lysine = [E2 ubiquitin-conjugating enzyme]-L-cysteine + N(6)-ubiquitinyl-[acceptor protein]-L-lysine.. Its activity is regulated as follows. Exists in an autoinhibited state in the absence of substrate protein, due to interactions of the leucine-rich repeats with NEL domain. Is activated upon binding to a substrate protein. Functionally, effector E3 ubiquitin ligase that interferes with host's ubiquitination pathway and modulates the acute inflammatory responses, thus facilitating bacterial colonization within the host cell. Interacts with IKBKG (NEMO) and TNIP1 (ABIN-1), a ubiquitin-binding adapter protein, which results in TNIP1-dependent 'Lys-27'-linked polyubiquitination of IKBKG. Consequently, polyubiquitinated IKBKG undergoes proteasome-dependent degradation, which perturbs NF-kappa-B activation during bacterial infection. Mediates polyubiquitination of host U2AF1, leading to its proteasomal degradation. Catalyzes 'Lys-48'-linked polyubiquitination and subsequent degradation of a subset of host guanylate-binding proteins (GBP1, GBP2, GBP4 and GBP6), thereby suppressing host cell defense. In contrast, host GBP3 and GBP7 are not ubiquitinated by IpaH9.8. Uses UBE2D2 (UBCH5B) as an E2 ubiquitin-conjugating enzyme. The protein is E3 ubiquitin-protein ligase ipaH9.8 (ipaH9.8) of Shigella flexneri serotype X (strain 2002017).